The chain runs to 357 residues: Protein FAM118A (357 aa).

Position 1 is an N-acetylmethionine (methionine 1). A helical transmembrane segment spans residues 30-50; the sequence is LLLVIGTGVSAAVAPGIPALC. The residue at position 311 (serine 311) is a Phosphoserine.

The protein belongs to the FAM118 family.

Its subcellular location is the membrane. This is Protein FAM118A (FAM118A) from Homo sapiens (Human).